An 824-amino-acid chain; its full sequence is MDSEAFQHARDLLDLNFQSLAMKHMDLKQMELDTAAAKVDELTKQLESLWSDSPAPPGAQAGVPSRMARYSTSPVPEHFGSRGSPQKIATDGIEARFGRSESAPSLHPYSPLSPKGRPSSPRTPIYLQPDTYSSLDRAPSPRPRAFDGAGSPHGRAPSPRPGIGPVRQPGPSTPFDYLGRAGSPRGSPLAEGPQAFFPERGPSPRPPAAAYDTAGTFGSPLLGAGGSAFTPPLRAQDDSTLRRRPPKAWNESDLDVAYEKKSSQTASYERLDVFTRPASPGLQLLPWRESSLDGLGASGKDHLTSATLPRNYKVSPLASDRRSDVGSYRRSLGSAGPSGTLPRSWQPVSRIPMPPSSPQPRSTPRQRPIPLSMIFKLQNAFWEHGAGRAVLPGSPIFSRAPPPKLPPQPPPQPQMQPQPQPQPQMQPQSQAQPQTPAPQQTWSPMNEGLLKSPAELEPEPELEVLLAPVEEAGDADEGTVTRPLSPTRLQPALPPEAQTVPELEEVARVLAEIPRPLKRRGSMEQSPAVALPPTHKKQYQQIINRLFHRHGGPGPGGPEPELSTITEGSEARAGPPAPAPPAPIPPPAPPQSSPPEQPQSMEMRSVLRKVGSPRKARRARLNPLVLLLDAALTGELDVVQQAVKEMNDPSQPNEEGITALHNAICGANYPIVDFLIAAGANVNSPDSHGWTPLHCAASCNDTAICTALVQHGAAIFATTLSDGATAIEKCDPYREGYADCATYLADVEQSMGLMHNGVVYALWDYSAEFGDELSFREGESVTVLRRDGPEETDWWWASLHGQEGYVPRNYFGLFPRVKSQRSKI.

Met1 bears the N-acetylmethionine mark. 2 disordered regions span residues 48-87 and 99-271; these read SLWS…SPQK and RSES…YERL. Phosphoserine occurs at positions 84, 100, 102, 110, 113, 119, and 120. Thr123 is subject to Phosphothreonine. Phosphoserine is present on Ser134. Omega-N-methylarginine is present on residues Arg137, Arg142, Arg144, Arg160, Arg167, and Arg180. Residues Ser183, Ser187, and Ser203 each carry the phosphoserine modification. Arg205 carries the omega-N-methylarginine modification. At Thr275 the chain carries Phosphothreonine. A Phosphoserine modification is found at Ser279. Disordered regions lie at residues 291–370 and 388–501; these read SLDG…RPIP and RAVL…QTVP. Phosphothreonine is present on Thr307. Phosphoserine occurs at positions 315, 331, and 338. The residue at position 340 (Thr340) is a Phosphothreonine. The span at 359-370 shows a compositional bias: low complexity; it reads QPRSTPRQRPIP. Residues 400–424 show a composition bias toward pro residues; that stretch reads APPPKLPPQPPPQPQMQPQPQPQPQ. Residues 425–440 are compositionally biased toward low complexity; it reads MQPQSQAQPQTPAPQQ. A phosphoserine mark is found at Ser522, Ser563, and Ser593. A disordered region spans residues 547-614; the sequence is FHRHGGPGPG…SVLRKVGSPR (68 aa). The segment covering 575-597 has biased composition (pro residues); that stretch reads PPAPAPPAPIPPPAPPQSSPPEQ. ANK repeat units follow at residues 655–684 and 688–717; these read EGIT…NVNS and HGWT…AIFA. The 63-residue stretch at 754-816 folds into the SH3 domain; that stretch reads MHNGVVYALW…PRNYFGLFPR (63 aa).

It belongs to the iASPP family. Interacts with TP63 and TP73. Interacts with RELA NF-kappa-B subunit and with SP1 via its C-terminal part. Interacts (via SH3 domain and ANK repeats) with p53/TP53; the interaction inhibits pro-apoptotic activity of p53/TP53. As to expression, most abundant in skin with high levels also found in heart, testis and stomach. In 15.5 dpc embryonic heart, expressed at higher levels in atria than ventricles.

It is found in the cytoplasm. Its subcellular location is the nucleus. Its function is as follows. Regulator that plays a central role in regulation of apoptosis and transcription via its interaction with NF-kappa-B and p53/TP53 proteins. Inhibits p53/TP53 function, possibly by preventing the association between p53/TP53 and ASPP1 or ASPP2, and therefore suppressing the subsequent activation of apoptosis. Is involved in NF-kappa-B dependent negative regulation of inflammatory response. In Mus musculus (Mouse), this protein is RelA-associated inhibitor.